Consider the following 198-residue polypeptide: Molybdenum cofactor guanylyltransferase (198 aa).

Residues 14–16 (LAG), Lys27, Asp73, and Asp103 contribute to the GTP site. Asp103 provides a ligand contact to Mg(2+).

Belongs to the MobA family. As to quaternary structure, monomer. It depends on Mg(2+) as a cofactor.

The protein localises to the cytoplasm. It carries out the reaction Mo-molybdopterin + GTP + H(+) = Mo-molybdopterin guanine dinucleotide + diphosphate. Transfers a GMP moiety from GTP to Mo-molybdopterin (Mo-MPT) cofactor (Moco or molybdenum cofactor) to form Mo-molybdopterin guanine dinucleotide (Mo-MGD) cofactor. This Pseudomonas aeruginosa (strain ATCC 15692 / DSM 22644 / CIP 104116 / JCM 14847 / LMG 12228 / 1C / PRS 101 / PAO1) protein is Molybdenum cofactor guanylyltransferase.